The sequence spans 169 residues: Endoribonuclease YbeY (169 aa).

The tract at residues 72 to 95 (GPVAAPRQEPDSPPACRKDSSHAE) is disordered. Histidine 131, histidine 135, and histidine 141 together coordinate Zn(2+).

It belongs to the endoribonuclease YbeY family. Zn(2+) is required as a cofactor.

The protein localises to the cytoplasm. Single strand-specific metallo-endoribonuclease involved in late-stage 70S ribosome quality control and in maturation of the 3' terminus of the 16S rRNA. In Oleidesulfovibrio alaskensis (strain ATCC BAA-1058 / DSM 17464 / G20) (Desulfovibrio alaskensis), this protein is Endoribonuclease YbeY.